Here is a 209-residue protein sequence, read N- to C-terminus: Small ribosomal subunit protein uS4 (209 aa).

The S4 RNA-binding domain maps to 99–160 (ARLDSVAYRM…RARASLRCKA (62 aa)).

It belongs to the universal ribosomal protein uS4 family. As to quaternary structure, part of the 30S ribosomal subunit. Contacts protein S5. The interaction surface between S4 and S5 is involved in control of translational fidelity.

One of the primary rRNA binding proteins, it binds directly to 16S rRNA where it nucleates assembly of the body of the 30S subunit. Its function is as follows. With S5 and S12 plays an important role in translational accuracy. The protein is Small ribosomal subunit protein uS4 of Dechloromonas aromatica (strain RCB).